The primary structure comprises 190 residues: Vespryn-21 (190 aa).

Residues 1–20 (MLLFTLCFFADLENGGKALA) form the signal peptide. In terms of domain architecture, B30.2/SPRY spans 21–127 (SPPGKWQKAD…LIWQRGLWFL (107 aa)). The propeptide occupies 128 to 190 (QRLETDSDKL…LGGGVSLTNL (63 aa)).

This sequence belongs to the ohanin/vespryn family. Expressed by the venom gland.

It is found in the secreted. Neurotoxin that produces dose-dependent hypolocomotion and hyperalgesia in mice. May directly act on the central nervous system, as it is 6500-fold more potent when administered intracerebroventricularly than intraperitoneal. The polypeptide is Vespryn-21 (Drysdalia coronoides (White-lipped snake)).